Here is a 100-residue protein sequence, read N- to C-terminus: uncharacterized protein (100 aa).

The tract at residues 78–100 (NNGNLDFKGRADERRQPVSNLRM) is disordered. Basic and acidic residues predominate over residues 84 to 93 (FKGRADERRQ).

This is an uncharacterized protein from Saccharomyces cerevisiae (strain ATCC 204508 / S288c) (Baker's yeast).